We begin with the raw amino-acid sequence, 571 residues long: Urease subunit alpha (571 aa).

In terms of domain architecture, Urease spans 133–571; that stretch reads GGIDTHVHFI…LPLTQRYFLF (439 aa). Ni(2+) contacts are provided by H138, H140, and K221. K221 is modified (N6-carboxylysine). Residue H223 coordinates substrate. H250 and H276 together coordinate Ni(2+). The active-site Proton donor is the H324. Residue D364 coordinates Ni(2+).

This sequence belongs to the metallo-dependent hydrolases superfamily. Urease alpha subunit family. In terms of assembly, heterotrimer of UreA (gamma), UreB (beta) and UreC (alpha) subunits. Three heterotrimers associate to form the active enzyme. The cofactor is Ni cation. Post-translationally, carboxylation allows a single lysine to coordinate two nickel ions.

Its subcellular location is the cytoplasm. The catalysed reaction is urea + 2 H2O + H(+) = hydrogencarbonate + 2 NH4(+). The protein operates within nitrogen metabolism; urea degradation; CO(2) and NH(3) from urea (urease route): step 1/1. This is Urease subunit alpha from Staphylococcus saprophyticus subsp. saprophyticus (strain ATCC 15305 / DSM 20229 / NCIMB 8711 / NCTC 7292 / S-41).